Here is a 147-residue protein sequence, read N- to C-terminus: uncharacterized protein (147 aa).

One can recognise an HTH LytTR-type domain in the interval 44 to 147; that stretch reads LVGYIDKEIH…LKSIKERLSI (104 aa).

It is found in the cytoplasm. This is an uncharacterized protein from Staphylococcus aureus (strain Mu50 / ATCC 700699).